The primary structure comprises 522 residues: Peptide methionine sulfoxide reductase MsrA/MsrB (522 aa).

The 158-residue stretch at 17-174 (LALGACSPKI…ALALIRNPNA (158 aa)) folds into the Thioredoxin domain. A disulfide bond links cysteine 68 and cysteine 71. Residues 199 to 354 (RTIYLAGGCF…PNGYCHIDIR (156 aa)) form a peptide methionine sulfoxide reductase A region. Cysteine 207 is a catalytic residue. In terms of domain architecture, MsrB spans 383 to 506 (DAELKRTLTE…NGASLKFIPL (124 aa)). Cysteine 440 and cysteine 495 are oxidised to a cystine. Residue cysteine 495 is the Nucleophile of the active site.

This sequence in the N-terminal section; belongs to the thioredoxin family. In the central section; belongs to the MsrA Met sulfoxide reductase family. It in the C-terminal section; belongs to the MsrB Met sulfoxide reductase family.

The catalysed reaction is L-methionyl-[protein] + [thioredoxin]-disulfide + H2O = L-methionyl-(S)-S-oxide-[protein] + [thioredoxin]-dithiol. It carries out the reaction [thioredoxin]-disulfide + L-methionine + H2O = L-methionine (S)-S-oxide + [thioredoxin]-dithiol. The enzyme catalyses L-methionyl-[protein] + [thioredoxin]-disulfide + H2O = L-methionyl-(R)-S-oxide-[protein] + [thioredoxin]-dithiol. Has an important function as a repair enzyme for proteins that have been inactivated by oxidation. Catalyzes the reversible oxidation-reduction of methionine sulfoxide in proteins to methionine. This chain is Peptide methionine sulfoxide reductase MsrA/MsrB (msrAB), found in Neisseria gonorrhoeae.